The following is a 154-amino-acid chain: uncharacterized protein (154 aa).

A helical transmembrane segment spans residues 23-43 (SAVALVTFAGAALSGVIPAIA).

It localises to the membrane. This is an uncharacterized protein from Mycobacterium tuberculosis (strain CDC 1551 / Oshkosh).